A 1375-amino-acid chain; its full sequence is DNA-directed RNA polymerase subunit beta (1375 aa).

The protein belongs to the RNA polymerase beta chain family. The RNAP catalytic core consists of 2 alpha, 1 beta, 1 beta' and 1 omega subunit. When a sigma factor is associated with the core the holoenzyme is formed, which can initiate transcription.

The catalysed reaction is RNA(n) + a ribonucleoside 5'-triphosphate = RNA(n+1) + diphosphate. Its function is as follows. DNA-dependent RNA polymerase catalyzes the transcription of DNA into RNA using the four ribonucleoside triphosphates as substrates. The sequence is that of DNA-directed RNA polymerase subunit beta from Coxiella burnetii (strain CbuG_Q212) (Coxiella burnetii (strain Q212)).